The primary structure comprises 244 residues: Tetraspanin-2A (244 aa).

Residues Met-1–Thr-22 lie on the Cytoplasmic side of the membrane. Residues Leu-23–Trp-43 traverse the membrane as a helical segment. Topologically, residues Leu-44–Ser-61 are extracellular. The chain crosses the membrane as a helical span at residues Phe-62 to Leu-82. The Cytoplasmic segment spans residues Gly-83 to Asn-91. A helical membrane pass occupies residues Thr-92–Gly-112. Residues Ser-113 to Trp-206 are Extracellular-facing. The chain crosses the membrane as a helical span at residues Ile-207–Val-227. Topologically, residues Leu-228–Arg-244 are cytoplasmic.

It belongs to the tetraspanin (TM4SF) family. In terms of assembly, forms a complex with Ssk and mesh.

The protein resides in the apicolateral cell membrane. It localises to the cell junction. Its subcellular location is the septate junction. Its function is as follows. Required for assembly of smooth septate junctions (sSJs), together with Ssk and mesh. Important for barrier function of the midgut epithelium. The protein is Tetraspanin-2A of Drosophila melanogaster (Fruit fly).